Reading from the N-terminus, the 378-residue chain is MKCAHFVQQQCLSCRHINQPMPVQVAAKSQVLSQLLSGFEVEQWREPVFGPESGFRNKAKMVVLGAAHQPILGIVTPTGEPVSLCDCNLYPIDMQQLLHRLELFVRQAGIPPYNVDKVKGELKFILLTRSQIKGEYLLRFVLRSHKSIERIERELPQLLSEYPQIKVVSVNIQPVHMAILEGEEELFLTEETRLSEQFNDVPLFIRPKSFFQTHPEIAAKLYQTAREWVAELKPDTLWDLFCGVGGFGLHCASKQSALTGIEISAEAITCAKLSAEAMGLTQVNFTALDSTGFAQGCDAKDKPDVVIVNPPRRGIGESLCQSLSAFAPKAILYSSCNPHTLAKDLACIQGYRVQKVQLFDMFPHTDHFEVLVMLLKDA.

4 residues coordinate [4Fe-4S] cluster: C3, C11, C14, and C87. S-adenosyl-L-methionine is bound by residues Q212, F241, E262, and N309. C336 (nucleophile) is an active-site residue.

It belongs to the class I-like SAM-binding methyltransferase superfamily. RNA M5U methyltransferase family. RlmC subfamily.

It catalyses the reaction uridine(747) in 23S rRNA + S-adenosyl-L-methionine = 5-methyluridine(747) in 23S rRNA + S-adenosyl-L-homocysteine + H(+). Its function is as follows. Catalyzes the formation of 5-methyl-uridine at position 747 (m5U747) in 23S rRNA. The protein is 23S rRNA (uracil(747)-C(5))-methyltransferase RlmC of Shewanella halifaxensis (strain HAW-EB4).